The chain runs to 469 residues: 3-isopropylmalate dehydratase large subunit (469 aa).

The [4Fe-4S] cluster site is built by Cys-347, Cys-410, and Cys-413.

The protein belongs to the aconitase/IPM isomerase family. LeuC type 1 subfamily. As to quaternary structure, heterodimer of LeuC and LeuD. [4Fe-4S] cluster is required as a cofactor.

The catalysed reaction is (2R,3S)-3-isopropylmalate = (2S)-2-isopropylmalate. It functions in the pathway amino-acid biosynthesis; L-leucine biosynthesis; L-leucine from 3-methyl-2-oxobutanoate: step 2/4. Its function is as follows. Catalyzes the isomerization between 2-isopropylmalate and 3-isopropylmalate, via the formation of 2-isopropylmaleate. The polypeptide is 3-isopropylmalate dehydratase large subunit (Ralstonia nicotianae (strain ATCC BAA-1114 / GMI1000) (Ralstonia solanacearum)).